A 172-amino-acid chain; its full sequence is Thioredoxin Y1, chloroplastic (172 aa).

Residues 1–62 (MASISLSSST…SSTTRCTPRR (62 aa)) constitute a chloroplast transit peptide. A Thioredoxin domain is found at 63-169 (IEAKKQTFDS…LIQRIEDSLK (107 aa)). Residues Cys93 and Cys96 each act as nucleophile in the active site. A disulfide bond links Cys93 and Cys96.

The protein belongs to the thioredoxin family. Plant Y-type subfamily. Expressed in roots and seeds.

It localises to the plastid. The protein localises to the chloroplast stroma. Functionally, thiol-disulfide oxidoreductase that poorly activates chloroplastic malate dehydrogenase (NADP-MDH) and fructose-1,6-bisphosphatase. Provides reducing equivalents for peroxiredoxin Q. This Arabidopsis thaliana (Mouse-ear cress) protein is Thioredoxin Y1, chloroplastic.